A 177-amino-acid chain; its full sequence is Adenine phosphoribosyltransferase (177 aa).

It belongs to the purine/pyrimidine phosphoribosyltransferase family. Homodimer.

Its subcellular location is the cytoplasm. The enzyme catalyses AMP + diphosphate = 5-phospho-alpha-D-ribose 1-diphosphate + adenine. It participates in purine metabolism; AMP biosynthesis via salvage pathway; AMP from adenine: step 1/1. Its function is as follows. Catalyzes a salvage reaction resulting in the formation of AMP, that is energically less costly than de novo synthesis. The polypeptide is Adenine phosphoribosyltransferase (Chlorobium limicola (strain DSM 245 / NBRC 103803 / 6330)).